Here is a 134-residue protein sequence, read N- to C-terminus: Protein NrdI (134 aa).

This sequence belongs to the NrdI family.

In terms of biological role, probably involved in ribonucleotide reductase function. The protein is Protein NrdI of Serratia proteamaculans (strain 568).